A 180-amino-acid chain; its full sequence is ADP-ribosylation factor 4 (180 aa).

Residue Gly2 is the site of N-myristoyl glycine attachment. GTP-binding positions include 24–31, 67–71, and 126–129; these read GLDAAGKT, DVGGQ, and NKQD. The residue at position 147 (Ser147) is a Phosphoserine.

Belongs to the small GTPase superfamily. Arf family. As to quaternary structure, forms a complex containing RAB11A, ASAP1, RAB3IP, RAP11FIP3 and ARF4; the complex promotes preciliary trafficking; the complex binds to RHO in photoreceptor cells and promotes RHO ciliary transport.

Its subcellular location is the golgi apparatus. The protein resides in the membrane. Functionally, GTP-binding protein that functions as an allosteric activator of the cholera toxin catalytic subunit, an ADP-ribosyltransferase. Involved in protein trafficking; may modulate vesicle budding and uncoating within the Golgi apparatus. Part of the ciliary targeting complex containing Rab11, ASAP1, Rabin8/RAB3IP, RAB11FIP3 and ARF4, which direct preciliary vesicle trafficking to mother centriole and ciliogenesis initiation. This chain is ADP-ribosylation factor 4 (ARF4), found in Bos taurus (Bovine).